A 154-amino-acid chain; its full sequence is Fucose mutarotase (154 aa).

The active-site Proton donor is the His24. A substrate-binding site is contributed by Asp32. Asp69 is a catalytic residue. The substrate site is built by Met79, Tyr120, Tyr138, and Asn140. Tyr120 is an active-site residue.

Belongs to the RbsD / FucU family. As to quaternary structure, mainly homodimer, but also exists as homotetramer, homooctamer, and homodecamer. The homodimeric form seems catalytically inactive.

It catalyses the reaction alpha-L-fucose = beta-L-fucose. It functions in the pathway carbohydrate metabolism; L-fucose metabolism. Functionally, involved in the interconversion between alpha- and beta-L-fucoses. L-Fucose (6-deoxy-L-galactose) exists as alpha-L-fucose (29.5%) and beta-L-fucose (70.5%), the beta-form is metabolized through the salvage pathway. GDP-L-fucose formed either by the de novo or salvage pathways is transported into the endoplasmic reticulum, where it serves as a substrate for N- and O-glycosylations by fucosyltransferases. Fucosylated structures expressed on cell surfaces or secreted in biological fluids are believed to play a critical role in cell-cell adhesion and recognition processes. The protein is Fucose mutarotase (FUOM) of Homo sapiens (Human).